The primary structure comprises 73 residues: Large ribosomal subunit protein bL31 (73 aa).

It belongs to the bacterial ribosomal protein bL31 family. Type A subfamily. In terms of assembly, part of the 50S ribosomal subunit.

Functionally, binds the 23S rRNA. This chain is Large ribosomal subunit protein bL31, found in Sinorhizobium fredii (strain NBRC 101917 / NGR234).